The chain runs to 183 residues: Endoribonuclease YbeY (183 aa).

The Zn(2+) site is built by histidine 140, histidine 144, and histidine 150.

This sequence belongs to the endoribonuclease YbeY family. The cofactor is Zn(2+).

It localises to the cytoplasm. Its function is as follows. Single strand-specific metallo-endoribonuclease involved in late-stage 70S ribosome quality control and in maturation of the 3' terminus of the 16S rRNA. This Bradyrhizobium diazoefficiens (strain JCM 10833 / BCRC 13528 / IAM 13628 / NBRC 14792 / USDA 110) protein is Endoribonuclease YbeY.